A 187-amino-acid chain; its full sequence is Putative protein 2 (187 aa).

Helical transmembrane passes span 10-27 (MLAA…NVGV) and 99-121 (VTII…LLLV).

This sequence belongs to the TMEM9 family.

It is found in the membrane. This chain is Putative protein 2, found in Takifugu rubripes (Japanese pufferfish).